The sequence spans 441 residues: MSEMTPREIVHELDAHIIGQNKAKRAVAVALRNRWRRMQLAPDLRQEVTPKNILMIGPTGVGKTEIARRLAKLANAPFIKVEATKFTEVGYVGKEVEQIIRDLTDSAVKMTREQQMKKCRFRAEELAEERILDALLPKAKEDWDSEKKDDSGTRQIFRKKLREGQLDDKEIDIDIAAPQIGVEIMAPPGMEEMTNQLQGLFQNLGQSTSKRKKLKIKDAFKQLIEDEAAKLVNQEDLKEQAIDLVEQNGIVFLDEIDKICKRGETSGPDVSREGVQRDLLPLVEGCTVSTKHGMVKTDHILFIASGAFQMSKPSDLIPELQGRLPIRVELDPLTANDFKRILTEPNASLTEQYIALMATEGVTISFLESGIDKLAEAAWQVNERTENIGARRLHTVMEKLMEDISFDASDKSGSAFVIDADYVTEHLDTLVQDEDLSRFIL.

ATP is bound by residues Ile18, 60-65 (GVGKTE), Asp254, Glu319, and Arg391.

It belongs to the ClpX chaperone family. HslU subfamily. In terms of assembly, a double ring-shaped homohexamer of HslV is capped on each side by a ring-shaped HslU homohexamer. The assembly of the HslU/HslV complex is dependent on binding of ATP.

Its subcellular location is the cytoplasm. ATPase subunit of a proteasome-like degradation complex; this subunit has chaperone activity. The binding of ATP and its subsequent hydrolysis by HslU are essential for unfolding of protein substrates subsequently hydrolyzed by HslV. HslU recognizes the N-terminal part of its protein substrates and unfolds these before they are guided to HslV for hydrolysis. The protein is ATP-dependent protease ATPase subunit HslU of Shewanella denitrificans (strain OS217 / ATCC BAA-1090 / DSM 15013).